Reading from the N-terminus, the 141-residue chain is Nucleoside diphosphate kinase (141 aa).

6 residues coordinate ATP: Lys11, Phe59, Arg87, Thr93, Arg104, and Asn114. The active-site Pros-phosphohistidine intermediate is the His117.

It belongs to the NDK family. As to quaternary structure, homotetramer. Mg(2+) serves as cofactor.

Its subcellular location is the cytoplasm. It catalyses the reaction a 2'-deoxyribonucleoside 5'-diphosphate + ATP = a 2'-deoxyribonucleoside 5'-triphosphate + ADP. The catalysed reaction is a ribonucleoside 5'-diphosphate + ATP = a ribonucleoside 5'-triphosphate + ADP. In terms of biological role, major role in the synthesis of nucleoside triphosphates other than ATP. The ATP gamma phosphate is transferred to the NDP beta phosphate via a ping-pong mechanism, using a phosphorylated active-site intermediate. This is Nucleoside diphosphate kinase from Janthinobacterium sp. (strain Marseille) (Minibacterium massiliensis).